Reading from the N-terminus, the 475-residue chain is MSKKLHIKTWGCQMNEYDSSKMADLLDEYEGYTLTDNAEEADVLLLNTCSIREKAQEKVFHQLGRWKTLKDKKPGLIIGVGGCVASQEGKAIKERAQCVDLIFGPQTLHRLPEMIDQIKDGKKAVIDVSFPEVEKFDRLPEPRAEGPSAFVSIMEGCSKYCSFCVVPYTRGEEVSRPLDDVILEIAQLAEQGVREVNLLGQNVNAYRGATHDDEICTFAELLRYVAAIDGIDRLRFTTSHPIEFTQDIIDVYEDTPELVSFLHLPVQSGSDLILTQMKRGHMAIEYKSIIRRLRKARPDILISSDFIIGFPGESKQDFADTMKLIEDIQFDHSFSFIYSARPGTPAADLPDNVSLDEKKERLAILQDRITQQAMRYSRQMVGTVQRILVEGPSVKNPMELRGRTENSRVVNFEGLHEHIGKFVDVEIVDVYTNSLRGVFIRGEDEMDLRRDLRPSDITAKYKQADDLGVTLFTPA.

One can recognise an MTTase N-terminal domain in the interval 3–120; sequence KKLHIKTWGC…LPEMIDQIKD (118 aa). [4Fe-4S] cluster contacts are provided by Cys12, Cys49, Cys83, Cys157, Cys161, and Cys164. Residues 143–375 form the Radical SAM core domain; it reads RAEGPSAFVS…QDRITQQAMR (233 aa). One can recognise a TRAM domain in the interval 378-441; it reads RQMVGTVQRI…TNSLRGVFIR (64 aa).

This sequence belongs to the methylthiotransferase family. MiaB subfamily. In terms of assembly, monomer. [4Fe-4S] cluster is required as a cofactor.

It localises to the cytoplasm. The catalysed reaction is N(6)-dimethylallyladenosine(37) in tRNA + (sulfur carrier)-SH + AH2 + 2 S-adenosyl-L-methionine = 2-methylsulfanyl-N(6)-dimethylallyladenosine(37) in tRNA + (sulfur carrier)-H + 5'-deoxyadenosine + L-methionine + A + S-adenosyl-L-homocysteine + 2 H(+). In terms of biological role, catalyzes the methylthiolation of N6-(dimethylallyl)adenosine (i(6)A), leading to the formation of 2-methylthio-N6-(dimethylallyl)adenosine (ms(2)i(6)A) at position 37 in tRNAs that read codons beginning with uridine. The sequence is that of tRNA-2-methylthio-N(6)-dimethylallyladenosine synthase from Shewanella pealeana (strain ATCC 700345 / ANG-SQ1).